Consider the following 392-residue polypeptide: Bifunctional enzyme Fae/Hps (392 aa).

Residues 1–161 are formaldehyde-activating enzyme; the sequence is MFQIGEALMG…EESNKSTHAI (161 aa). Residue His-17 is the Proton donor of the active site. Positions 19, 48, 66, 68, and 83 each coordinate substrate. The 3-hexulose-6-phosphate synthase stretch occupies residues 162-392; it reads MGFKVTRLWD…IDQFRVMTDF (231 aa).

In the N-terminal section; belongs to the formaldehyde-activating enzyme family. This sequence in the C-terminal section; belongs to the HPS/KGPDC family. HPS subfamily.

The catalysed reaction is 5,6,7,8-tetrahydromethanopterin + formaldehyde = 5,10-methylenetetrahydromethanopterin + H2O. It carries out the reaction D-ribulose 5-phosphate + formaldehyde = D-arabino-hex-3-ulose 6-phosphate. Its pathway is carbohydrate biosynthesis; D-ribose 5-phosphate biosynthesis. In terms of biological role, catalyzes the condensation of formaldehyde with tetrahydromethanopterin (H(4)MPT) to 5,10-methylenetetrahydromethanopterin. Functionally, catalyzes the reversible formation of ribulose-5-phosphate and formaldehyde from 3-hexulose-6-phosphate. The protein is Bifunctional enzyme Fae/Hps of Methanosarcina barkeri (strain Fusaro / DSM 804).